A 254-amino-acid chain; its full sequence is Coenzyme F420:L-glutamate ligase (254 aa).

GTP-binding positions include 11 to 14, 40 to 41, and Lys-45; these read IPLI and ST. Asp-109 is an a divalent metal cation binding site. A GTP-binding site is contributed by Asn-112. A divalent metal cation contacts are provided by Asp-150, Thr-151, and Glu-208. Position 206–213 (206–213) interacts with GTP; sequence MGEGAGGI.

This sequence belongs to the CofE family. As to quaternary structure, homodimer. The cofactor is Mg(2+). Requires Mn(2+) as cofactor. K(+) is required as a cofactor.

It catalyses the reaction oxidized coenzyme F420-0 + GTP + L-glutamate = oxidized coenzyme F420-1 + GDP + phosphate + H(+). It carries out the reaction oxidized coenzyme F420-1 + GTP + L-glutamate = oxidized coenzyme F420-2 + GDP + phosphate + H(+). It functions in the pathway cofactor biosynthesis; coenzyme F420 biosynthesis. In terms of biological role, catalyzes the GTP-dependent successive addition of two or more gamma-linked L-glutamates to the L-lactyl phosphodiester of 7,8-didemethyl-8-hydroxy-5-deazariboflavin (F420-0) to form coenzyme F420-0-glutamyl-glutamate (F420-2) or polyglutamated F420 derivatives. The polypeptide is Coenzyme F420:L-glutamate ligase (Methanosarcina acetivorans (strain ATCC 35395 / DSM 2834 / JCM 12185 / C2A)).